The following is a 318-amino-acid chain: Protein W (318 aa).

2 disordered regions span residues 1 to 23 (MDQD…GGRE) and 38 to 318 (SEPT…KKGA). Basic and acidic residues predominate over residues 7-20 (ILKEDSEVEREAPG). Polar residues predominate over residues 50–59 (LHNTINTPQG). Ser-68 is subject to Phosphoserine; by host. The span at 83 to 101 (RSGEESRVSGRTSKPEAEA) shows a compositional bias: basic and acidic residues. Ser-125 carries the phosphoserine; by host modification. Basic and acidic residues predominate over residues 150–168 (GIEDENREMAAHPDKRGED). The span at 191–206 (ASNNGRSMEPGSSHSA) shows a compositional bias: polar residues. Phosphoserine; by host is present on residues Ser-192, Ser-249, Ser-257, and Ser-260.

This Sendai virus (strain Fushimi) (SeV) protein is Protein W (P/V/C).